Reading from the N-terminus, the 397-residue chain is Enoyl-[acyl-carrier-protein] reductase [NADH] (397 aa).

Residues 48–53 (GASTGY), 74–75 (FE), 111–112 (DA), and 139–140 (VA) each bind NAD(+). Y225 serves as a coordination point for substrate. The active-site Proton donor is Y235. NAD(+) is bound by residues K244 and 273–275 (VVT).

Belongs to the TER reductase family. In terms of assembly, monomer.

It catalyses the reaction a 2,3-saturated acyl-[ACP] + NAD(+) = a (2E)-enoyl-[ACP] + NADH + H(+). The protein operates within lipid metabolism; fatty acid biosynthesis. Involved in the final reduction of the elongation cycle of fatty acid synthesis (FAS II). Catalyzes the reduction of a carbon-carbon double bond in an enoyl moiety that is covalently linked to an acyl carrier protein (ACP). The protein is Enoyl-[acyl-carrier-protein] reductase [NADH] of Burkholderia mallei (strain SAVP1).